Here is a 388-residue protein sequence, read N- to C-terminus: Succinate--CoA ligase [ADP-forming] subunit beta (388 aa).

In terms of domain architecture, ATP-grasp spans 9–244 (KQLFARYGLP…QSQEDPREAQ (236 aa)). ATP-binding positions include Lys46, 53–55 (GRG), Glu99, Thr102, and Glu107. Positions 199 and 213 each coordinate Mg(2+). Residues Asn264 and 321 to 323 (GIV) each bind substrate.

This sequence belongs to the succinate/malate CoA ligase beta subunit family. In terms of assembly, heterotetramer of two alpha and two beta subunits. It depends on Mg(2+) as a cofactor.

The catalysed reaction is succinate + ATP + CoA = succinyl-CoA + ADP + phosphate. It catalyses the reaction GTP + succinate + CoA = succinyl-CoA + GDP + phosphate. The protein operates within carbohydrate metabolism; tricarboxylic acid cycle; succinate from succinyl-CoA (ligase route): step 1/1. Succinyl-CoA synthetase functions in the citric acid cycle (TCA), coupling the hydrolysis of succinyl-CoA to the synthesis of either ATP or GTP and thus represents the only step of substrate-level phosphorylation in the TCA. The beta subunit provides nucleotide specificity of the enzyme and binds the substrate succinate, while the binding sites for coenzyme A and phosphate are found in the alpha subunit. The chain is Succinate--CoA ligase [ADP-forming] subunit beta from Salmonella dublin (strain CT_02021853).